The chain runs to 491 residues: mRNA cleavage and polyadenylation factor clp1 (491 aa).

The ATP site is built by Glu28 and Lys78. The tract at residues 128-160 is disordered; that stretch reads RAAAAQAQQQHPTHHQQQQQGRGAGAGVARSKP. The span at 130-148 shows a compositional bias: low complexity; it reads AAAQAQQQHPTHHQQQQQG. 171-176 contributes to the ATP binding site; sequence GVGKTS.

This sequence belongs to the Clp1 family. Clp1 subfamily. Component of a pre-mRNA cleavage factor complex. Interacts directly with PCF11.

The protein localises to the nucleus. In terms of biological role, required for endonucleolytic cleavage during polyadenylation-dependent pre-mRNA 3'-end formation. The chain is mRNA cleavage and polyadenylation factor clp1 (paa-7) from Neurospora crassa (strain ATCC 24698 / 74-OR23-1A / CBS 708.71 / DSM 1257 / FGSC 987).